Reading from the N-terminus, the 510-residue chain is NAD(P)H-quinone oxidoreductase subunit 2 B, chloroplastic (510 aa).

13 helical membrane passes run 24–44 (LLLFDGSFIFPECILIFGLIL), 57–77 (IPWLYFISSTSLVMSITALLF), 99–119 (IFQFLILLCSTLCIPLSVEYI), 124–144 (MAITEFLLFVLTATLGGMFLC), 149–169 (LITIFVAPECFSLCSYLLSGY), 183–203 (YLLMGGASSSILVHGFSWLYG), 227–247 (PGISIALIFITVGIGFKLSPA), 295–315 (WHLLLEILAILSMILGNLIAI), 323–343 (MLAYSSIGQIGYVIIGIIVGD), 354–374 (YMLFYISMNLGTFACIVSFGL), 392–412 (AFLALSLALCLLSLGGLPPLA), 418–438 (LHLFWCGWQAGLYFLVSIGLL), and 482–502 (LSMIVCVIASTIPGISMNPII).

The protein belongs to the complex I subunit 2 family. As to quaternary structure, NDH is composed of at least 16 different subunits, 5 of which are encoded in the nucleus.

Its subcellular location is the plastid. The protein resides in the chloroplast thylakoid membrane. It carries out the reaction a plastoquinone + NADH + (n+1) H(+)(in) = a plastoquinol + NAD(+) + n H(+)(out). The enzyme catalyses a plastoquinone + NADPH + (n+1) H(+)(in) = a plastoquinol + NADP(+) + n H(+)(out). NDH shuttles electrons from NAD(P)H:plastoquinone, via FMN and iron-sulfur (Fe-S) centers, to quinones in the photosynthetic chain and possibly in a chloroplast respiratory chain. The immediate electron acceptor for the enzyme in this species is believed to be plastoquinone. Couples the redox reaction to proton translocation, and thus conserves the redox energy in a proton gradient. This is NAD(P)H-quinone oxidoreductase subunit 2 B, chloroplastic from Morus indica (Mulberry).